The sequence spans 158 residues: Low molecular weight phosphotyrosine protein phosphatase (158 aa).

The residue at position 2 (A2) is an N-acetylalanine. C13 functions as the Nucleophile in the catalytic mechanism. Residue R19 is part of the active site. Catalysis depends on D130, which acts as the Proton donor. Phosphotyrosine occurs at positions 132 and 133.

It belongs to the low molecular weight phosphotyrosine protein phosphatase family.

It is found in the cytoplasm. It carries out the reaction O-phospho-L-tyrosyl-[protein] + H2O = L-tyrosyl-[protein] + phosphate. It catalyses the reaction a phosphate monoester + H2O = an alcohol + phosphate. Its function is as follows. Acts on tyrosine phosphorylated proteins, low-MW aryl phosphates and natural and synthetic acyl phosphates. The sequence is that of Low molecular weight phosphotyrosine protein phosphatase (ACP1) from Gallus gallus (Chicken).